The chain runs to 212 residues: Probable GTP-binding protein EngB (212 aa).

The 175-residue stretch at Gly27–Pro201 folds into the EngB-type G domain. GTP contacts are provided by residues Gly35–Ser42, Gly62–Leu66, Asp80–Gly83, Thr147–Asp150, and Phe180–Ser182. Mg(2+)-binding residues include Ser42 and Thr64.

This sequence belongs to the TRAFAC class TrmE-Era-EngA-EngB-Septin-like GTPase superfamily. EngB GTPase family. It depends on Mg(2+) as a cofactor.

Necessary for normal cell division and for the maintenance of normal septation. The polypeptide is Probable GTP-binding protein EngB (Tolumonas auensis (strain DSM 9187 / NBRC 110442 / TA 4)).